A 188-amino-acid polypeptide reads, in one-letter code: Ribosome maturation factor RimM (188 aa).

The PRC barrel domain occupies 98-171; the sequence is EGEFFQGDLV…RIVIHPPEYV (74 aa).

It belongs to the RimM family. In terms of assembly, binds ribosomal protein uS19.

It localises to the cytoplasm. Functionally, an accessory protein needed during the final step in the assembly of 30S ribosomal subunit, possibly for assembly of the head region. Essential for efficient processing of 16S rRNA. May be needed both before and after RbfA during the maturation of 16S rRNA. It has affinity for free ribosomal 30S subunits but not for 70S ribosomes. The protein is Ribosome maturation factor RimM of Myxococcus xanthus (strain DK1622).